Consider the following 63-residue polypeptide: Conotoxin Cal6.28 (63 aa).

A signal peptide spans Met1–Ala22. 3 disulfides stabilise this stretch: Cys34-Cys45, Cys37-Cys51, and Cys44-Cys58.

Belongs to the conotoxin O1 superfamily. Expressed by the venom duct.

It localises to the secreted. Functionally, probable neurotoxin. In Californiconus californicus (California cone), this protein is Conotoxin Cal6.28.